The chain runs to 747 residues: MSLLEQLARKRIEKSKGLLSADQSHSTSKSASLLERLHKNRETKDNNAETKRKDLKTLLAKDKVKRSDFTPNQHSVSLSLKLSALKKSNSDLEKQGKSVTLDSKENELPTKRKSPDDKLNLEESWKAIKEMNHYCFLKNDPCINQTDDFAFTNFIIKDKKNSLSTSIPLSSQNSSFLSLKKHNNELLGIFVPCNLPKTTRKVAIENFNRPSPDDIIQSAQLNAFNEKLENLNIKSVPKAEKKEPINLQTPPTESIDIHSFIATHPLNLTCLFLGDTNAGKSTLLGHLLYDLNEISMSSMRELQKKSSNLDPSSSNSFKVILDNTKTERENGFSMFKKVIQVENDLLPPSSTLTLIDTPGSIKYFNKETLNSILTFDPEVYVLVIDCNYDSWEKSLDGPNNQIYEILKVISYLNKNSACKKHLIILLNKADLISWDKHRLEMIQSELNYVLKENFQWTDAEFQFIPCSGLLGSNLNKTENITKSKYKSEFDSINYVPEWYEGPTFFSQLYLLVEHNMNKIETTLEEPFVGTILQSSVLQPIAEINYVSLKVLINSGYIQSGQTIEIHTQYEDFHYYGIVSRMKNSKQILETNTKNNISVGLNPDILEVLVKIHNTEDFTKKQFHIRKGDIIIHSRKTNTLSPNLPNTLKLLALRLIKLSIQTHALSDPVDLGSELLLYHNLTHNAVKLVKILGTNDISINPNQSLIVEVEIIEPDFALNVIDSKYITNNIVLTSIDHKVIAVGRIACQ.

The segment at 14 to 51 is disordered; the sequence is KSKGLLSADQSHSTSKSASLLERLHKNRETKDNNAETK. Polar residues predominate over residues 21–31; it reads ADQSHSTSKSA. Over residues 35-51 the composition is skewed to basic and acidic residues; it reads ERLHKNRETKDNNAETK. Residues S88 and S90 each carry the phosphoserine modification. Residues 89–117 form a disordered region; sequence NSDLEKQGKSVTLDSKENELPTKRKSPDD. One can recognise a tr-type G domain in the interval 265-503; it reads PLNLTCLFLG…YVPEWYEGPT (239 aa). The segment at 274-281 is G1; the sequence is GDTNAGKS. 274-281 is a GTP binding site; it reads GDTNAGKS. The tract at residues 331–335 is G2; that stretch reads GFSMF. The tract at residues 356–359 is G3; that stretch reads DTPG. Residues 356-360 and 427-430 each bind GTP; these read DTPGS and NKAD. The tract at residues 427 to 430 is G4; the sequence is NKAD. Residues 467–469 are G5; that stretch reads SGL.

Belongs to the TRAFAC class translation factor GTPase superfamily. Classic translation factor GTPase family. As to quaternary structure, interacts with the exosome and with the SKI complex composed of at least SKI2, SKI3 and SKI8. Interacts directly with SKI3 and SKI8.

It localises to the cytoplasm. Functionally, represses the expression of non-poly(A) mRNAs like L-A or M viruses and is therefore involved in antiviral system. Mediates interactions via its N-terminus between the exosome and the SKI complex which operate in the 3'-to-5' mRNA-decay pathway. By interacting with NAM7, is also required for nonsense-mediated 3'-to-5' mRNA-decay (NMD). May recognize a stalled 80S ribosome at the 3'-end of a nonstop mRNA which leads to the recruitment of the exosome and SKI complexes to the mRNAs to be degraded. This is Superkiller protein 7 (SKI7) from Saccharomyces cerevisiae (strain ATCC 204508 / S288c) (Baker's yeast).